Consider the following 469-residue polypeptide: tRNA-2-methylthio-N(6)-dimethylallyladenosine synthase (469 aa).

The 116-residue stretch at 27-142 folds into the MTTase N-terminal domain; that stretch reads KKVYIRTFGC…LPQMLAQRAR (116 aa). [4Fe-4S] cluster-binding residues include Cys-36, Cys-73, Cys-105, Cys-179, Cys-183, and Cys-186. Positions 165–398 constitute a Radical SAM core domain; sequence KVDGAAAFVS…QATIEDNVRR (234 aa). Residues 401–467 form the TRAM domain; it reads ERRVGTVQRV…PHSLRGEPVL (67 aa).

It belongs to the methylthiotransferase family. MiaB subfamily. As to quaternary structure, monomer. The cofactor is [4Fe-4S] cluster.

It is found in the cytoplasm. The enzyme catalyses N(6)-dimethylallyladenosine(37) in tRNA + (sulfur carrier)-SH + AH2 + 2 S-adenosyl-L-methionine = 2-methylsulfanyl-N(6)-dimethylallyladenosine(37) in tRNA + (sulfur carrier)-H + 5'-deoxyadenosine + L-methionine + A + S-adenosyl-L-homocysteine + 2 H(+). Functionally, catalyzes the methylthiolation of N6-(dimethylallyl)adenosine (i(6)A), leading to the formation of 2-methylthio-N6-(dimethylallyl)adenosine (ms(2)i(6)A) at position 37 in tRNAs that read codons beginning with uridine. This chain is tRNA-2-methylthio-N(6)-dimethylallyladenosine synthase, found in Leptothrix cholodnii (strain ATCC 51168 / LMG 8142 / SP-6) (Leptothrix discophora (strain SP-6)).